The chain runs to 330 residues: MARLYYDTDANLEPLADKTVAIIGYGSQGHAHALNLRDSGVQVIVGLYPGSPSWPKAEQDGLMVKTVADAAAAADWVMILLPDEVQKAVFQGEIRPHLQPGNVLLFAHGFNIHFGQIQPPANVDVIMVAPKGPGHLVRRTYQAGEGVPCLFAVYQDASGMARERAMAYAKAIGGTRAGILETTFREETETDLFGEQVVLCGGLTALIKAGFETLVEAGYQPELAYFECLHEVKLIVDLIVEGGLEKMRHSISNTAEYGDYTRGPRIITEQTRAEMKRILAEIQSGQFAREFVLENQAGKPGLTAMRRREAEHPIEQVGRELRAMFSWLKK.

The 181-residue stretch at 2–182 folds into the KARI N-terminal Rossmann domain; sequence ARLYYDTDAN…GGTRAGILET (181 aa). NADP(+)-binding positions include 25–28, Ser-51, Ser-53, and 83–86; these read YGSQ and DEVQ. His-108 is an active-site residue. NADP(+) is bound at residue Gly-134. Residues 183–328 enclose the KARI C-terminal knotted domain; sequence TFREETETDL…RELRAMFSWL (146 aa). Positions 191, 195, 227, and 231 each coordinate Mg(2+). A substrate-binding site is contributed by Ser-252.

Belongs to the ketol-acid reductoisomerase family. Mg(2+) is required as a cofactor.

It catalyses the reaction (2R)-2,3-dihydroxy-3-methylbutanoate + NADP(+) = (2S)-2-acetolactate + NADPH + H(+). It carries out the reaction (2R,3R)-2,3-dihydroxy-3-methylpentanoate + NADP(+) = (S)-2-ethyl-2-hydroxy-3-oxobutanoate + NADPH + H(+). It functions in the pathway amino-acid biosynthesis; L-isoleucine biosynthesis; L-isoleucine from 2-oxobutanoate: step 2/4. It participates in amino-acid biosynthesis; L-valine biosynthesis; L-valine from pyruvate: step 2/4. In terms of biological role, involved in the biosynthesis of branched-chain amino acids (BCAA). Catalyzes an alkyl-migration followed by a ketol-acid reduction of (S)-2-acetolactate (S2AL) to yield (R)-2,3-dihydroxy-isovalerate. In the isomerase reaction, S2AL is rearranged via a Mg-dependent methyl migration to produce 3-hydroxy-3-methyl-2-ketobutyrate (HMKB). In the reductase reaction, this 2-ketoacid undergoes a metal-dependent reduction by NADPH to yield (R)-2,3-dihydroxy-isovalerate. This chain is Ketol-acid reductoisomerase (NADP(+)), found in Synechococcus sp. (strain JA-2-3B'a(2-13)) (Cyanobacteria bacterium Yellowstone B-Prime).